Here is a 428-residue protein sequence, read N- to C-terminus: Enolase 1 (428 aa).

Gln167 contributes to the (2R)-2-phosphoglycerate binding site. Catalysis depends on Glu209, which acts as the Proton donor. Mg(2+)-binding residues include Asp246, Glu288, and Asp315. (2R)-2-phosphoglycerate-binding residues include Lys340, Arg369, Ser370, and Lys391. Residue Lys340 is the Proton acceptor of the active site.

This sequence belongs to the enolase family. As to quaternary structure, component of the RNA degradosome, a multiprotein complex involved in RNA processing and mRNA degradation. Requires Mg(2+) as cofactor.

It is found in the cytoplasm. The protein localises to the secreted. The protein resides in the cell surface. The enzyme catalyses (2R)-2-phosphoglycerate = phosphoenolpyruvate + H2O. The protein operates within carbohydrate degradation; glycolysis; pyruvate from D-glyceraldehyde 3-phosphate: step 4/5. Its function is as follows. Catalyzes the reversible conversion of 2-phosphoglycerate (2-PG) into phosphoenolpyruvate (PEP). It is essential for the degradation of carbohydrates via glycolysis. The sequence is that of Enolase 1 from Pseudomonas syringae pv. tomato (strain ATCC BAA-871 / DC3000).